A 430-amino-acid chain; its full sequence is N-lysine methyltransferase SMYD2-A (430 aa).

The SET domain occupies 5 to 239; sequence EGLERFDSPG…AGDEVFTSYI (235 aa). Residue 15–17 coordinates S-adenosyl-L-methionine; sequence KGR. Positions 50, 53, 63, 66, 72, 76, 84, and 88 each coordinate Zn(2+). Residues 50 to 88 form an MYND-type zinc finger; it reads CDFCFARKEGLSKCGKCKQAFYCNVDCQKGDWPMHKLEC. S-adenosyl-L-methionine is bound by residues His-135, 204–205, and 256–258; these read NH and YFF.

It belongs to the class V-like SAM-binding methyltransferase superfamily.

The protein localises to the cytoplasm. It localises to the cytosol. Its subcellular location is the nucleus. It carries out the reaction L-lysyl(4)-[histone H3] + 3 S-adenosyl-L-methionine = N(6),N(6),N(6)-trimethyl-L-lysyl(4)-[histone H3] + 3 S-adenosyl-L-homocysteine + 3 H(+). The catalysed reaction is L-lysyl-[protein] + S-adenosyl-L-methionine = N(6)-methyl-L-lysyl-[protein] + S-adenosyl-L-homocysteine + H(+). Protein-lysine N-methyltransferase that methylates both histones and non-histone proteins, including p53/TP53 and RB1. Specifically trimethylates histone H3 'Lys-4' (H3K4me3) in vivo. The activity requires interaction with HSP90alpha. Shows even higher methyltransferase activity on p53/TP53. Monomethylates 'Lys-370' of p53/TP53, leading to decreased DNA-binding activity and subsequent transcriptional regulation activity of p53/TP53. Monomethylates RB1 at 'Lys-860'. This chain is N-lysine methyltransferase SMYD2-A (smyd2-a), found in Xenopus laevis (African clawed frog).